Here is a 234-residue protein sequence, read N- to C-terminus: Large ribosomal subunit protein uL1 (234 aa).

The protein belongs to the universal ribosomal protein uL1 family. In terms of assembly, part of the 50S ribosomal subunit.

Binds directly to 23S rRNA. The L1 stalk is quite mobile in the ribosome, and is involved in E site tRNA release. Functionally, protein L1 is also a translational repressor protein, it controls the translation of the L11 operon by binding to its mRNA. The chain is Large ribosomal subunit protein uL1 from Yersinia enterocolitica serotype O:8 / biotype 1B (strain NCTC 13174 / 8081).